Reading from the N-terminus, the 285-residue chain is N(G),N(G)-dimethylarginine dimethylaminohydrolase 1 (285 aa).

Alanine 2 bears the N-acetylalanine mark. Residues leucine 30, aspartate 73, glutamate 78, aspartate 79, arginine 98, and arginine 145 each coordinate substrate. Residue histidine 173 is the Proton donor of the active site. The residue at position 222 (cysteine 222) is an S-nitrosocysteine. A substrate-binding site is contributed by valine 268. Position 274 is an S-nitrosocysteine (cysteine 274). Catalysis depends on cysteine 274, which acts as the Nucleophile. Cysteine 274 contacts Zn(2+).

As to quaternary structure, monomer. Widely distributed, highest concentrations found in brain, brain cortex and kidney (at protein level).

It carries out the reaction N(omega),N(omega)-dimethyl-L-arginine + H2O = dimethylamine + L-citrulline. The catalysed reaction is N(omega)-methyl-L-arginine + H2O = L-citrulline + methylamine. Copurifies with a tightly bound zinc ion. Activated by release of zinc. His and other agents that promote the release of bound zinc ions activate the enzyme (in vitro). Inhibited by S-nitrosylation. Zinc protects the protein against S-nitrosylation. Its function is as follows. Hydrolyzes N(G),N(G)-dimethyl-L-arginine (ADMA) and N(G)-monomethyl-L-arginine (MMA) which act as inhibitors of NOS. Has therefore a role in the regulation of nitric oxide generation. The polypeptide is N(G),N(G)-dimethylarginine dimethylaminohydrolase 1 (DDAH1) (Bos taurus (Bovine)).